The sequence spans 423 residues: NADH-quinone oxidoreductase subunit F (423 aa).

An NAD(+)-binding site is contributed by 54–63 (GRGGAGFSTG). 166-213 (GAGAYICGEETALLESLEGKKGMPRLKPPFPAGFGLYGCPTTINNVES) is a binding site for FMN. Positions 344, 347, 350, and 390 each coordinate [4Fe-4S] cluster.

The protein belongs to the complex I 51 kDa subunit family. FMN is required as a cofactor. Requires [4Fe-4S] cluster as cofactor.

It carries out the reaction a quinone + NADH + 5 H(+)(in) = a quinol + NAD(+) + 4 H(+)(out). NDH-1 shuttles electrons from NADH, via FMN and iron-sulfur (Fe-S) centers, to quinones in the respiratory chain. Couples the redox reaction to proton translocation (for every two electrons transferred, four hydrogen ions are translocated across the cytoplasmic membrane), and thus conserves the redox energy in a proton gradient. This is NADH-quinone oxidoreductase subunit F (nuoF) from Rickettsia akari (strain Hartford).